Here is a 196-residue protein sequence, read N- to C-terminus: Molybdenum cofactor guanylyltransferase (196 aa).

GTP-binding positions include 10–12 (LAG), K23, N51, D69, and D99. D99 provides a ligand contact to Mg(2+).

It belongs to the MobA family. As to quaternary structure, monomer. The cofactor is Mg(2+).

It is found in the cytoplasm. It catalyses the reaction Mo-molybdopterin + GTP + H(+) = Mo-molybdopterin guanine dinucleotide + diphosphate. Transfers a GMP moiety from GTP to Mo-molybdopterin (Mo-MPT) cofactor (Moco or molybdenum cofactor) to form Mo-molybdopterin guanine dinucleotide (Mo-MGD) cofactor. The polypeptide is Molybdenum cofactor guanylyltransferase (Shewanella loihica (strain ATCC BAA-1088 / PV-4)).